Consider the following 395-residue polypeptide: Lipoyl synthase, mitochondrial (395 aa).

The N-terminal 24 residues, 1–24, are a transit peptide targeting the mitochondrion; sequence MVKLPSASRIRSLATVPSTATRAF. Residues cysteine 107, cysteine 112, cysteine 118, cysteine 137, cysteine 141, cysteine 144, and serine 357 each contribute to the [4Fe-4S] cluster site. The Radical SAM core domain occupies 122–346; it reads GKGNATATIM…KNVAEGMGFL (225 aa).

This sequence belongs to the radical SAM superfamily. Lipoyl synthase family. It depends on [4Fe-4S] cluster as a cofactor.

It is found in the mitochondrion. It catalyses the reaction [[Fe-S] cluster scaffold protein carrying a second [4Fe-4S](2+) cluster] + N(6)-octanoyl-L-lysyl-[protein] + 2 oxidized [2Fe-2S]-[ferredoxin] + 2 S-adenosyl-L-methionine + 4 H(+) = [[Fe-S] cluster scaffold protein] + N(6)-[(R)-dihydrolipoyl]-L-lysyl-[protein] + 4 Fe(3+) + 2 hydrogen sulfide + 2 5'-deoxyadenosine + 2 L-methionine + 2 reduced [2Fe-2S]-[ferredoxin]. The protein operates within protein modification; protein lipoylation via endogenous pathway; protein N(6)-(lipoyl)lysine from octanoyl-[acyl-carrier-protein]: step 2/2. Catalyzes the radical-mediated insertion of two sulfur atoms into the C-6 and C-8 positions of the octanoyl moiety bound to the lipoyl domains of lipoate-dependent enzymes, thereby converting the octanoylated domains into lipoylated derivatives. This is Lipoyl synthase, mitochondrial from Cryptococcus neoformans var. neoformans serotype D (strain B-3501A) (Filobasidiella neoformans).